Reading from the N-terminus, the 106-residue chain is Serine rich endogenous peptide 7 (106 aa).

Positions 1 to 26 are cleaved as a signal peptide; the sequence is MGKKCSSKFRQMLVLVLLLIVFTCLS. Composition is skewed to basic and acidic residues over residues 46–56 and 65–77; these read GIEDEGQERTH and RSVE…EGRR. The segment at 46–106 is disordered; it reads GIEDEGQERT…GGGRIPVAAS (61 aa). Short sequence motifs (SCOOP motif) lie at residues 58 to 72 and 86 to 100; these read LNSK…KTHH and GIRA…GGGR. 2 consecutive short sequence motifs (sxS motif essential for MIK2 binding) follow at residues 64–66 and 92–94; these read SRS and SKS.

It belongs to the serine rich endogenous peptide (SCOOP) phytocytokine family. As to quaternary structure, interacts with MIK2 (via extracellular leucine-rich repeat domain); this interaction triggers the formation of complex between MIK2 and the BAK1/SERK3 and SERK4 coreceptors, and subsequent BAK1 activation by phosphorylation. As to expression, mostly expressed in roots, and, to a lower extent, in seedlings shoots.

It is found in the cell membrane. The protein localises to the secreted. The protein resides in the extracellular space. It localises to the apoplast. In terms of biological role, brassicaceae-specific phytocytokine (plant endogenous peptide released into the apoplast) perceived by MIK2 in a BAK1/SERK3 and SERK4 coreceptors-dependent manner, that modulates various physiological and antimicrobial processes including growth prevention and reactive oxygen species (ROS) response regulation. This is Serine rich endogenous peptide 7 from Arabidopsis thaliana (Mouse-ear cress).